The sequence spans 212 residues: Uracil phosphoribosyltransferase (212 aa).

5-phospho-alpha-D-ribose 1-diphosphate-binding positions include Arg-78, Arg-103, and 130–138 (DPMLATGGS). Residues Ile-193 and 198–200 (GDA) contribute to the uracil site. Asp-199 contributes to the 5-phospho-alpha-D-ribose 1-diphosphate binding site.

It belongs to the UPRTase family. It depends on Mg(2+) as a cofactor.

The enzyme catalyses UMP + diphosphate = 5-phospho-alpha-D-ribose 1-diphosphate + uracil. The protein operates within pyrimidine metabolism; UMP biosynthesis via salvage pathway; UMP from uracil: step 1/1. Allosterically activated by GTP. Its function is as follows. Catalyzes the conversion of uracil and 5-phospho-alpha-D-ribose 1-diphosphate (PRPP) to UMP and diphosphate. The protein is Uracil phosphoribosyltransferase of Pseudomonas entomophila (strain L48).